The chain runs to 231 residues: NADH-ubiquinone oxidoreductase chain 4 (231 aa).

Transmembrane regions (helical) follow at residues 1 to 21, 34 to 54, 63 to 85, 89 to 111, 128 to 148, and 169 to 189; these read PIAG…YGII, MFLP…LTCL, IAYS…TPWG, AMAL…NTTY, ILPM…AIPP, and TIIL…HMLL.

The protein belongs to the complex I subunit 4 family.

The protein resides in the mitochondrion membrane. It catalyses the reaction a ubiquinone + NADH + 5 H(+)(in) = a ubiquinol + NAD(+) + 4 H(+)(out). Functionally, core subunit of the mitochondrial membrane respiratory chain NADH dehydrogenase (Complex I) that is believed to belong to the minimal assembly required for catalysis. Complex I functions in the transfer of electrons from NADH to the respiratory chain. The immediate electron acceptor for the enzyme is believed to be ubiquinone. The chain is NADH-ubiquinone oxidoreductase chain 4 (MT-ND4) from Bothrops bilineatus (Green jararaca).